Here is a 127-residue protein sequence, read N- to C-terminus: Auxin-responsive protein SAUR76 (127 aa).

Residues 20 to 40 are disordered; it reads SFNTKPNQPPAQTNHSRSSAV.

This sequence belongs to the ARG7 family. In terms of tissue distribution, expressed in cotyledons, hypocotyls and roots of young seedlings. Expressed in emerging lateral root, leaves, flowers, stamens and filaments.

The protein localises to the nucleus. It localises to the cytoplasm. The protein resides in the cell membrane. Functionally, may be involved in the regulation of ethylene receptor signaling. Promotes cell expansion and plant growth. Involved in the regulation of cell elongation. This chain is Auxin-responsive protein SAUR76, found in Arabidopsis thaliana (Mouse-ear cress).